The following is a 444-amino-acid chain: N-succinylarginine dihydrolase (444 aa).

Residues 19 to 28 (AGLSFGNVAS), N110, and 137 to 138 (HR) contribute to the substrate site. Residue E174 is part of the active site. R214 contacts substrate. H250 is an active-site residue. Substrate contacts are provided by D252 and N362. The active-site Nucleophile is the C368.

It belongs to the succinylarginine dihydrolase family. In terms of assembly, homodimer.

It catalyses the reaction N(2)-succinyl-L-arginine + 2 H2O + 2 H(+) = N(2)-succinyl-L-ornithine + 2 NH4(+) + CO2. It functions in the pathway amino-acid degradation; L-arginine degradation via AST pathway; L-glutamate and succinate from L-arginine: step 2/5. Catalyzes the hydrolysis of N(2)-succinylarginine into N(2)-succinylornithine, ammonia and CO(2). The sequence is that of N-succinylarginine dihydrolase from Shewanella oneidensis (strain ATCC 700550 / JCM 31522 / CIP 106686 / LMG 19005 / NCIMB 14063 / MR-1).